The following is a 181-amino-acid chain: Probable cobalt-precorrin-6B C(15)-methyltransferase (decarboxylating) (181 aa).

S-adenosyl-L-methionine is bound by residues threonine 16, 40 to 44 (GCGSG), aspartate 61, and alanine 89.

Belongs to the methyltransferase superfamily. Archaeal-type CbiT family.

The catalysed reaction is Co-precorrin-6B + S-adenosyl-L-methionine = Co-precorrin-7 + S-adenosyl-L-homocysteine + CO2. Its pathway is cofactor biosynthesis; adenosylcobalamin biosynthesis; cob(II)yrinate a,c-diamide from sirohydrochlorin (anaerobic route): step 8/10. Functionally, catalyzes the methylation of C-15 in cobalt-precorrin-6B followed by the decarboxylation of C-12 to form cobalt-precorrin-7. The chain is Probable cobalt-precorrin-6B C(15)-methyltransferase (decarboxylating) from Methanococcus maripaludis (strain C6 / ATCC BAA-1332).